We begin with the raw amino-acid sequence, 178 residues long: Large ribosomal subunit protein uL6 (178 aa).

It belongs to the universal ribosomal protein uL6 family. Part of the 50S ribosomal subunit.

This protein binds to the 23S rRNA, and is important in its secondary structure. It is located near the subunit interface in the base of the L7/L12 stalk, and near the tRNA binding site of the peptidyltransferase center. The protein is Large ribosomal subunit protein uL6 of Francisella tularensis subsp. tularensis (strain WY96-3418).